We begin with the raw amino-acid sequence, 373 residues long: Inhibitor of nuclear factor kappa-B kinase-interacting protein (373 aa).

Positions 1–11 (MSEVKSRKKPG) are enriched in basic residues. The segment at 1–38 (MSEVKSRKKPGPKVAAPEPEKRSDGRKNPEARGDAGWA) is disordered. Positions 18–33 (EPEKRSDGRKNPEARG) are enriched in basic and acidic residues. Residues 43–59 (GLSLLSLAMTLGLAWLV) traverse the membrane as a helical segment. 2 coiled-coil regions span residues 86-257 (LQSK…NKLS) and 285-324 (QDLI…TLEG). The N-linked (GlcNAc...) asparagine glycan is linked to Asn151.

In terms of processing, N-glycosylated at Asn-151.

It localises to the endoplasmic reticulum membrane. Functionally, target of p53/TP53 with pro-apoptotic function. The polypeptide is Inhibitor of nuclear factor kappa-B kinase-interacting protein (Ikbip) (Mus musculus (Mouse)).